The chain runs to 1035 residues: Ephrin type-A receptor 6 (1035 aa).

The signal sequence occupies residues 1-22 (MGGCEVREFLLQFGFFLPLLTA). The Extracellular portion of the chain corresponds to 23 to 549 (WTGDCSHVSN…MAAEQGQILV (527 aa)). The Eph LBD domain maps to 33-211 (QVVLLDTTTV…FYKKCPFTVR (179 aa)). 2 Fibronectin type-III domains span residues 330-440 (PPSA…TDHD) and 441-536 (APSL…TGDE). Residues Asn-342, Asn-396, and Asn-409 are each glycosylated (N-linked (GlcNAc...) asparagine). The chain crosses the membrane as a helical span at residues 550–570 (IATAAVGGFTLLVILTLFFLI). Over 571–1035 (TGRCQWYIKA…MHIQEKGFHV (465 aa)) the chain is Cytoplasmic. A phosphotyrosine; by autocatalysis mark is found at Tyr-605 and Tyr-611. The Protein kinase domain occupies 630-943 (IRIERVIGAG…RNPSALHTLV (314 aa)). Residues 636–644 (IGAGEFGEV) and Lys-662 contribute to the ATP site. Asp-797 acts as the Proton acceptor in catalysis. A phosphotyrosine; by autocatalysis mark is found at Tyr-830 and Tyr-977. The 65-residue stretch at 960-1024 (PLFVTVGDWL…VSSIQTLRLH (65 aa)) folds into the SAM domain. The PDZ-binding signature appears at 1033–1035 (FHV).

The protein belongs to the protein kinase superfamily. Tyr protein kinase family. Ephrin receptor subfamily. In terms of assembly, heterotetramer upon binding of the ligand. The heterotetramer is composed of an ephrin dimer and a receptor dimer. Oligomerization is probably required to induce biological responses. Interacts (via SAM domain) with ANKS1A (via SAM domain).

It is found in the membrane. The catalysed reaction is L-tyrosyl-[protein] + ATP = O-phospho-L-tyrosyl-[protein] + ADP + H(+). Receptor tyrosine kinase which binds promiscuously GPI-anchored ephrin-A family ligands residing on adjacent cells, leading to contact-dependent bidirectional signaling into neighboring cells. The signaling pathway downstream of the receptor is referred to as forward signaling while the signaling pathway downstream of the ephrin ligand is referred to as reverse signaling. This chain is Ephrin type-A receptor 6 (Epha6), found in Mus musculus (Mouse).